The chain runs to 126 residues: Fluoride-specific ion channel FluC (126 aa).

4 helical membrane passes run 5–25, 35–55, 68–88, and 99–119; these read LHFLAVGVGAAAGAWLRWLLG, WGTLAANLGGGYLIGLILGLI, ALVTGFLGGLTTFSTFSAEVV, and AAGYAVVSLAGSLCLTALGLA. The Na(+) site is built by Gly75 and Thr78.

It belongs to the fluoride channel Fluc/FEX (TC 1.A.43) family.

The protein localises to the cell inner membrane. It carries out the reaction fluoride(in) = fluoride(out). With respect to regulation, na(+) is not transported, but it plays an essential structural role and its presence is essential for fluoride channel function. Fluoride-specific ion channel. Important for reducing fluoride concentration in the cell, thus reducing its toxicity. In Bordetella avium (strain 197N), this protein is Fluoride-specific ion channel FluC.